Consider the following 239-residue polypeptide: THAP domain-containing protein 3 (239 aa).

A THAP-type zinc finger spans residues 1-82; it reads MPKSCAARQC…LKHNAVPTVF (82 aa). The segment at 84–177 is disordered; the sequence is FQDPTQQVRE…RRTPNKQPSD (94 aa). S122 bears the Phosphoserine mark. The HCFC1-binding motif (HBM) signature appears at 177–180; sequence DHSY.

In terms of assembly, component of a THAP1/THAP3-HCFC1-OGT complex that contains at least, either THAP1 or THAP3, HCFC1 and OGT. Interacts directly with OGT and HCFC1 (via its HBM). As to expression, highly expressed in heart, skeletal muscle and placenta. Weaker expression in brain, kidney and liver.

In terms of biological role, component of a THAP1/THAP3-HCFC1-OGT complex that is required for the regulation of the transcriptional activity of RRM1. The sequence is that of THAP domain-containing protein 3 (THAP3) from Homo sapiens (Human).